The primary structure comprises 85 residues: Small ribosomal subunit protein uS17 (85 aa).

It belongs to the universal ribosomal protein uS17 family. In terms of assembly, part of the 30S ribosomal subunit.

One of the primary rRNA binding proteins, it binds specifically to the 5'-end of 16S ribosomal RNA. The polypeptide is Small ribosomal subunit protein uS17 (Trichlorobacter lovleyi (strain ATCC BAA-1151 / DSM 17278 / SZ) (Geobacter lovleyi)).